Reading from the N-terminus, the 420-residue chain is CinA-like protein (420 aa).

It belongs to the CinA family.

The protein is CinA-like protein of Geotalea uraniireducens (strain Rf4) (Geobacter uraniireducens).